The chain runs to 329 residues: DNA-directed RNA polymerase subunit alpha (329 aa).

The segment at 1–235 (MQGSVTEFLK…EQLEAFVDLR (235 aa)) is alpha N-terminal domain (alpha-NTD). An alpha C-terminal domain (alpha-CTD) region spans residues 249 to 329 (FDPILLRPVD…NWPPASIADE (81 aa)).

This sequence belongs to the RNA polymerase alpha chain family. In terms of assembly, homodimer. The RNAP catalytic core consists of 2 alpha, 1 beta, 1 beta' and 1 omega subunit. When a sigma factor is associated with the core the holoenzyme is formed, which can initiate transcription.

It catalyses the reaction RNA(n) + a ribonucleoside 5'-triphosphate = RNA(n+1) + diphosphate. DNA-dependent RNA polymerase catalyzes the transcription of DNA into RNA using the four ribonucleoside triphosphates as substrates. The chain is DNA-directed RNA polymerase subunit alpha from Pectobacterium atrosepticum (strain SCRI 1043 / ATCC BAA-672) (Erwinia carotovora subsp. atroseptica).